We begin with the raw amino-acid sequence, 718 residues long: Polyribonucleotide nucleotidyltransferase (718 aa).

Mg(2+)-binding residues include Asp493 and Asp499. Residues 560-619 form the KH domain; it reads PRMITIKINPEKIRDVIGKGGSVIRALTEETGTTIDISDDGVVTIASTSSEGMAEAKKRI. Residues 629-697 enclose the S1 motif domain; that stretch reads GQVYEGTVLK…EKGRVRLSAK (69 aa).

The protein belongs to the polyribonucleotide nucleotidyltransferase family. Requires Mg(2+) as cofactor.

It localises to the cytoplasm. The catalysed reaction is RNA(n+1) + phosphate = RNA(n) + a ribonucleoside 5'-diphosphate. In terms of biological role, involved in mRNA degradation. Catalyzes the phosphorolysis of single-stranded polyribonucleotides processively in the 3'- to 5'-direction. In Paraburkholderia phytofirmans (strain DSM 17436 / LMG 22146 / PsJN) (Burkholderia phytofirmans), this protein is Polyribonucleotide nucleotidyltransferase.